We begin with the raw amino-acid sequence, 155 residues long: Large ribosomal subunit protein uL30 (155 aa).

Belongs to the universal ribosomal protein uL30 family. In terms of assembly, part of the 50S ribosomal subunit.

This chain is Large ribosomal subunit protein uL30, found in Pyrococcus abyssi (strain GE5 / Orsay).